A 145-amino-acid chain; its full sequence is 3-dehydroquinate dehydratase (145 aa).

The active-site Proton acceptor is Y24. Substrate contacts are provided by N76, H82, and D89. Residue H102 is the Proton donor of the active site. Substrate is bound by residues V103–S104 and R113.

This sequence belongs to the type-II 3-dehydroquinase family. In terms of assembly, homododecamer.

The enzyme catalyses 3-dehydroquinate = 3-dehydroshikimate + H2O. It functions in the pathway metabolic intermediate biosynthesis; chorismate biosynthesis; chorismate from D-erythrose 4-phosphate and phosphoenolpyruvate: step 3/7. Functionally, catalyzes a trans-dehydration via an enolate intermediate. The protein is 3-dehydroquinate dehydratase of Janthinobacterium sp. (strain Marseille) (Minibacterium massiliensis).